The sequence spans 330 residues: 4-hydroxythreonine-4-phosphate dehydrogenase (330 aa).

T133 contributes to the substrate binding site. Residues H161, H206, and H261 each coordinate a divalent metal cation. The substrate site is built by K269, N278, and R287.

It belongs to the PdxA family. Homodimer. Requires Zn(2+) as cofactor. It depends on Mg(2+) as a cofactor. The cofactor is Co(2+).

Its subcellular location is the cytoplasm. It carries out the reaction 4-(phosphooxy)-L-threonine + NAD(+) = 3-amino-2-oxopropyl phosphate + CO2 + NADH. It functions in the pathway cofactor biosynthesis; pyridoxine 5'-phosphate biosynthesis; pyridoxine 5'-phosphate from D-erythrose 4-phosphate: step 4/5. Functionally, catalyzes the NAD(P)-dependent oxidation of 4-(phosphooxy)-L-threonine (HTP) into 2-amino-3-oxo-4-(phosphooxy)butyric acid which spontaneously decarboxylates to form 3-amino-2-oxopropyl phosphate (AHAP). The sequence is that of 4-hydroxythreonine-4-phosphate dehydrogenase from Xylella fastidiosa (strain 9a5c).